The chain runs to 125 residues: Small ribosomal subunit protein uS12 (125 aa).

D89 carries the post-translational modification 3-methylthioaspartic acid. Residues 100–125 (GSLDTQGVQNRKQARSKYGAKRPKKA) are disordered. Positions 111-125 (KQARSKYGAKRPKKA) are enriched in basic residues.

Belongs to the universal ribosomal protein uS12 family. In terms of assembly, part of the 30S ribosomal subunit. Contacts proteins S8 and S17. May interact with IF1 in the 30S initiation complex.

Its function is as follows. With S4 and S5 plays an important role in translational accuracy. In terms of biological role, interacts with and stabilizes bases of the 16S rRNA that are involved in tRNA selection in the A site and with the mRNA backbone. Located at the interface of the 30S and 50S subunits, it traverses the body of the 30S subunit contacting proteins on the other side and probably holding the rRNA structure together. The combined cluster of proteins S8, S12 and S17 appears to hold together the shoulder and platform of the 30S subunit. The polypeptide is Small ribosomal subunit protein uS12 (Thioalkalivibrio sulfidiphilus (strain HL-EbGR7)).